Here is a 123-residue protein sequence, read N- to C-terminus: MSINKEQILDAVATMSVMDVVELITAMEDKFGVSAAAAVAVAAGGAAEAVEEQTEFDVVLSAIGGNKVAVIKAVRGATGLGLKEAKDLVESAPNATLKEGISKDDAEALKKSLEEAGASVEIK.

It belongs to the bacterial ribosomal protein bL12 family. As to quaternary structure, homodimer. Part of the ribosomal stalk of the 50S ribosomal subunit. Forms a multimeric L10(L12)X complex, where L10 forms an elongated spine to which 2 to 4 L12 dimers bind in a sequential fashion. Binds GTP-bound translation factors.

Its function is as follows. Forms part of the ribosomal stalk which helps the ribosome interact with GTP-bound translation factors. Is thus essential for accurate translation. The polypeptide is Large ribosomal subunit protein bL12 (Photorhabdus laumondii subsp. laumondii (strain DSM 15139 / CIP 105565 / TT01) (Photorhabdus luminescens subsp. laumondii)).